Reading from the N-terminus, the 387-residue chain is Sulfoacetaldehyde reductase (387 aa).

Belongs to the iron-containing alcohol dehydrogenase family.

The catalysed reaction is 2-hydroxyethane-1-sulfonate + NAD(+) = sulfoacetaldehyde + NADH + H(+). It participates in organosulfur degradation; alkanesulfonate degradation. In terms of biological role, involved in an anaerobic respiration pathway that converts the sulfonate taurine (2-aminoethanesulfonate) to ammonia, acetate and sulfide. Catalyzes the NADH-dependent reduction of sulfoacetaldehyde to 2-hydroxyethane-1-sulfonate (isethionate). Does not accept acetaldehyde as a substrate. This chain is Sulfoacetaldehyde reductase, found in Bilophila wadsworthia (strain 3_1_6).